We begin with the raw amino-acid sequence, 418 residues long: Serine hydroxymethyltransferase (418 aa).

(6S)-5,6,7,8-tetrahydrofolate is bound by residues Leu-121 and 125 to 127; that span reads GHL. Lys-230 carries the N6-(pyridoxal phosphate)lysine modification. 356–358 is a (6S)-5,6,7,8-tetrahydrofolate binding site; sequence SPF.

It belongs to the SHMT family. In terms of assembly, homodimer. Requires pyridoxal 5'-phosphate as cofactor.

The protein resides in the cytoplasm. The enzyme catalyses (6R)-5,10-methylene-5,6,7,8-tetrahydrofolate + glycine + H2O = (6S)-5,6,7,8-tetrahydrofolate + L-serine. It participates in one-carbon metabolism; tetrahydrofolate interconversion. The protein operates within amino-acid biosynthesis; glycine biosynthesis; glycine from L-serine: step 1/1. Catalyzes the reversible interconversion of serine and glycine with tetrahydrofolate (THF) serving as the one-carbon carrier. This reaction serves as the major source of one-carbon groups required for the biosynthesis of purines, thymidylate, methionine, and other important biomolecules. Also exhibits THF-independent aldolase activity toward beta-hydroxyamino acids, producing glycine and aldehydes, via a retro-aldol mechanism. In Idiomarina loihiensis (strain ATCC BAA-735 / DSM 15497 / L2-TR), this protein is Serine hydroxymethyltransferase.